We begin with the raw amino-acid sequence, 585 residues long: Neopullulanase 2 (585 aa).

Residues Asn143, Asp145, Asn148, Asp149, Gly169, and Asp171 each contribute to the Ca(2+) site. The substrate site is built by His244 and Arg323. Catalysis depends on Asp325, which acts as the Nucleophile. Glu354 (proton donor) is an active-site residue. Substrate is bound by residues His420–Asp421, Asp465, and Arg469.

Belongs to the glycosyl hydrolase 13 family. Monomer. The cofactor is Ca(2+).

It catalyses the reaction Hydrolysis of pullulan to panose (6-alpha-D-glucosylmaltose).. In terms of biological role, hydrolyzes pullulan efficiently but only a small amount of starch. Endohydrolysis of 1,4-alpha-glucosidic linkages in pullulan to form panose. Also cleaves (1-6)-alpha-glucosidic linkages to form maltotriose. The polypeptide is Neopullulanase 2 (tvaII) (Thermoactinomyces vulgaris).